The following is a 141-amino-acid chain: Hemoglobin subunit alpha-A (141 aa).

A Globin domain is found at 1-141 (VLSAADKTNV…VGTVLTAKYR (141 aa)). His58 is a binding site for O2. His87 serves as a coordination point for heme b.

Belongs to the globin family. Heterotetramer of two alpha chains and two beta chains. In terms of tissue distribution, red blood cells.

In terms of biological role, involved in oxygen transport from the lung to the various peripheral tissues. This Branta canadensis (Canada goose) protein is Hemoglobin subunit alpha-A (HBAA).